Reading from the N-terminus, the 271-residue chain is ATP synthase subunit delta (271 aa).

This sequence belongs to the ATPase delta chain family. F-type ATPases have 2 components, F(1) - the catalytic core - and F(0) - the membrane proton channel. F(1) has five subunits: alpha(3), beta(3), gamma(1), delta(1), epsilon(1). F(0) has three main subunits: a(1), b(2) and c(10-14). The alpha and beta chains form an alternating ring which encloses part of the gamma chain. F(1) is attached to F(0) by a central stalk formed by the gamma and epsilon chains, while a peripheral stalk is formed by the delta and b chains.

The protein localises to the cell membrane. F(1)F(0) ATP synthase produces ATP from ADP in the presence of a proton or sodium gradient. F-type ATPases consist of two structural domains, F(1) containing the extramembraneous catalytic core and F(0) containing the membrane proton channel, linked together by a central stalk and a peripheral stalk. During catalysis, ATP synthesis in the catalytic domain of F(1) is coupled via a rotary mechanism of the central stalk subunits to proton translocation. In terms of biological role, this protein is part of the stalk that links CF(0) to CF(1). It either transmits conformational changes from CF(0) to CF(1) or is implicated in proton conduction. The polypeptide is ATP synthase subunit delta (Beutenbergia cavernae (strain ATCC BAA-8 / DSM 12333 / CCUG 43141 / JCM 11478 / NBRC 16432 / NCIMB 13614 / HKI 0122)).